The sequence spans 142 residues: Large ribosomal subunit protein uL13 (142 aa).

Belongs to the universal ribosomal protein uL13 family. Part of the 50S ribosomal subunit.

Its function is as follows. This protein is one of the early assembly proteins of the 50S ribosomal subunit, although it is not seen to bind rRNA by itself. It is important during the early stages of 50S assembly. This chain is Large ribosomal subunit protein uL13, found in Hamiltonella defensa subsp. Acyrthosiphon pisum (strain 5AT).